A 277-amino-acid polypeptide reads, in one-letter code: 3-methyl-2-oxobutanoate hydroxymethyltransferase (277 aa).

Mg(2+) contacts are provided by Asp53 and Asp96. Residues 53–54 (DS), Asp96, and Lys126 contribute to the 3-methyl-2-oxobutanoate site. Glu128 contributes to the Mg(2+) binding site. The active-site Proton acceptor is the Glu195.

Belongs to the PanB family. Homodecamer; pentamer of dimers. Mg(2+) serves as cofactor.

The protein localises to the cytoplasm. It carries out the reaction 3-methyl-2-oxobutanoate + (6R)-5,10-methylene-5,6,7,8-tetrahydrofolate + H2O = 2-dehydropantoate + (6S)-5,6,7,8-tetrahydrofolate. It participates in cofactor biosynthesis; (R)-pantothenate biosynthesis; (R)-pantoate from 3-methyl-2-oxobutanoate: step 1/2. Its function is as follows. Catalyzes the reversible reaction in which hydroxymethyl group from 5,10-methylenetetrahydrofolate is transferred onto alpha-ketoisovalerate to form ketopantoate. The sequence is that of 3-methyl-2-oxobutanoate hydroxymethyltransferase from Chlorobaculum tepidum (strain ATCC 49652 / DSM 12025 / NBRC 103806 / TLS) (Chlorobium tepidum).